The chain runs to 683 residues: Translation factor guf1, mitochondrial (683 aa).

The transit peptide at 1–43 directs the protein to the mitochondrion; it reads MRGCLQLARWLSAAPKGTAASLTRAPFVLANAPRYFTSSASRA. The tr-type G domain occupies 66–250; it reads ERYRNFCIVA…KIPAYGHFPV (185 aa). GTP is bound by residues 75 to 82, 139 to 143, and 193 to 196; these read AHVDHGKS, DTPGH, and NKVD.

Belongs to the TRAFAC class translation factor GTPase superfamily. Classic translation factor GTPase family. LepA subfamily.

The protein localises to the mitochondrion inner membrane. The catalysed reaction is GTP + H2O = GDP + phosphate + H(+). Promotes mitochondrial protein synthesis. May act as a fidelity factor of the translation reaction, by catalyzing a one-codon backward translocation of tRNAs on improperly translocated ribosomes. Binds to mitochondrial ribosomes in a GTP-dependent manner. This Aspergillus fumigatus (strain ATCC MYA-4609 / CBS 101355 / FGSC A1100 / Af293) (Neosartorya fumigata) protein is Translation factor guf1, mitochondrial (guf1).